Consider the following 556-residue polypeptide: Phosphomethylpyrimidine synthase (556 aa).

Residues Asn-191, Met-220, Tyr-249, His-285, 305–307, 346–349, and Glu-385 contribute to the substrate site; these read SRG and DALR. His-389 is a binding site for Zn(2+). Tyr-412 contributes to the substrate binding site. His-453 serves as a coordination point for Zn(2+). The [4Fe-4S] cluster site is built by Cys-535, Cys-538, and Cys-543.

This sequence belongs to the ThiC family. The cofactor is [4Fe-4S] cluster.

The catalysed reaction is 5-amino-1-(5-phospho-beta-D-ribosyl)imidazole + S-adenosyl-L-methionine = 4-amino-2-methyl-5-(phosphooxymethyl)pyrimidine + CO + 5'-deoxyadenosine + formate + L-methionine + 3 H(+). The protein operates within cofactor biosynthesis; thiamine diphosphate biosynthesis. Its function is as follows. Catalyzes the synthesis of the hydroxymethylpyrimidine phosphate (HMP-P) moiety of thiamine from aminoimidazole ribotide (AIR) in a radical S-adenosyl-L-methionine (SAM)-dependent reaction. The polypeptide is Phosphomethylpyrimidine synthase (Chlorobaculum tepidum (strain ATCC 49652 / DSM 12025 / NBRC 103806 / TLS) (Chlorobium tepidum)).